Reading from the N-terminus, the 321-residue chain is Acetyl-coenzyme A carboxylase carboxyl transferase subunit alpha (321 aa).

In terms of domain architecture, CoA carboxyltransferase C-terminal spans 37–298; that stretch reads DLDDEIKRLQ…KQRILSDLED (262 aa).

This sequence belongs to the AccA family. Acetyl-CoA carboxylase is a heterohexamer composed of biotin carboxyl carrier protein (AccB), biotin carboxylase (AccC) and two subunits each of ACCase subunit alpha (AccA) and ACCase subunit beta (AccD).

The protein resides in the cytoplasm. It carries out the reaction N(6)-carboxybiotinyl-L-lysyl-[protein] + acetyl-CoA = N(6)-biotinyl-L-lysyl-[protein] + malonyl-CoA. The protein operates within lipid metabolism; malonyl-CoA biosynthesis; malonyl-CoA from acetyl-CoA: step 1/1. Its function is as follows. Component of the acetyl coenzyme A carboxylase (ACC) complex. First, biotin carboxylase catalyzes the carboxylation of biotin on its carrier protein (BCCP) and then the CO(2) group is transferred by the carboxyltransferase to acetyl-CoA to form malonyl-CoA. This is Acetyl-coenzyme A carboxylase carboxyl transferase subunit alpha from Mannheimia succiniciproducens (strain KCTC 0769BP / MBEL55E).